The chain runs to 128 residues: Cytochrome c' (128 aa).

Residues Q13, Q17, E69, T70, C118, C121, and H122 each coordinate heme c.

Post-translationally, binds 1 heme c group covalently per subunit.

Cytochrome c' is the most widely occurring bacterial c-type cytochrome. Cytochromes c' are high-spin proteins and the heme has no sixth ligand. Their exact function is not known. The polypeptide is Cytochrome c' (Magnetospirillum fulvum (Rhodospirillum fulvum)).